We begin with the raw amino-acid sequence, 346 residues long: Melanoma-associated antigen B3 (346 aa).

The segment at Met1–Lys35 is disordered. Over residues Thr18–Thr33 the composition is skewed to polar residues. In terms of domain architecture, MAGE spans Leu111–Ala310.

In terms of tissue distribution, expressed in testis.

The polypeptide is Melanoma-associated antigen B3 (MAGEB3) (Homo sapiens (Human)).